Reading from the N-terminus, the 216-residue chain is Glycerol-3-phosphate acyltransferase 3 (216 aa).

Transmembrane regions (helical) follow at residues 6 to 26 (LLLV…YLVS), 58 to 78 (LVAS…GLVI), 92 to 112 (LLFA…WPVF), 125 to 145 (FGGM…VLII), and 158 to 178 (ITGV…SGFP).

The protein belongs to the PlsY family. In terms of assembly, probably interacts with PlsX.

It is found in the cell membrane. The enzyme catalyses an acyl phosphate + sn-glycerol 3-phosphate = a 1-acyl-sn-glycero-3-phosphate + phosphate. It functions in the pathway lipid metabolism; phospholipid metabolism. Catalyzes the transfer of an acyl group from acyl-phosphate (acyl-PO(4)) to glycerol-3-phosphate (G3P) to form lysophosphatidic acid (LPA). This enzyme utilizes acyl-phosphate as fatty acyl donor, but not acyl-CoA or acyl-ACP. This chain is Glycerol-3-phosphate acyltransferase 3, found in Dehalococcoides mccartyi (strain CBDB1).